The chain runs to 387 residues: Protein kinase gsk3 (387 aa).

The Protein kinase domain maps to 32 to 316; sequence YTSSKVVGSG…AAEAMCHPFF (285 aa). Residues 38-46 and K61 each bind ATP; that span reads VGSGSFGVV. The active-site Proton acceptor is D157. S191 bears the Phosphoserine mark. Y192 carries the post-translational modification Phosphotyrosine; by autocatalysis. S335 is modified (phosphoserine).

Belongs to the protein kinase superfamily. CMGC Ser/Thr protein kinase family. GSK-3 subfamily. In terms of processing, autophosphorylated on tyrosine residues.

It is found in the cytoplasm. Its subcellular location is the nucleus. The catalysed reaction is L-seryl-[protein] + ATP = O-phospho-L-seryl-[protein] + ADP + H(+). The enzyme catalyses L-threonyl-[protein] + ATP = O-phospho-L-threonyl-[protein] + ADP + H(+). In terms of biological role, interacts with cdc14 which is thought to play a role in the initiation and completion of mitosis. Involved in the positive regulation of mis12. This is Protein kinase gsk3 (gsk3) from Schizosaccharomyces pombe (strain 972 / ATCC 24843) (Fission yeast).